The chain runs to 612 residues: Dihydroxy-acid dehydratase (612 aa).

Asp81 is a Mg(2+) binding site. Cys122 contributes to the [2Fe-2S] cluster binding site. Asp123 and Lys124 together coordinate Mg(2+). N6-carboxylysine is present on Lys124. Cys193 contacts [2Fe-2S] cluster. Glu489 serves as a coordination point for Mg(2+). Catalysis depends on Ser515, which acts as the Proton acceptor.

This sequence belongs to the IlvD/Edd family. As to quaternary structure, homodimer. Requires [2Fe-2S] cluster as cofactor. Mg(2+) serves as cofactor.

It catalyses the reaction (2R)-2,3-dihydroxy-3-methylbutanoate = 3-methyl-2-oxobutanoate + H2O. It carries out the reaction (2R,3R)-2,3-dihydroxy-3-methylpentanoate = (S)-3-methyl-2-oxopentanoate + H2O. It participates in amino-acid biosynthesis; L-isoleucine biosynthesis; L-isoleucine from 2-oxobutanoate: step 3/4. The protein operates within amino-acid biosynthesis; L-valine biosynthesis; L-valine from pyruvate: step 3/4. Functionally, functions in the biosynthesis of branched-chain amino acids. Catalyzes the dehydration of (2R,3R)-2,3-dihydroxy-3-methylpentanoate (2,3-dihydroxy-3-methylvalerate) into 2-oxo-3-methylpentanoate (2-oxo-3-methylvalerate) and of (2R)-2,3-dihydroxy-3-methylbutanoate (2,3-dihydroxyisovalerate) into 2-oxo-3-methylbutanoate (2-oxoisovalerate), the penultimate precursor to L-isoleucine and L-valine, respectively. This is Dihydroxy-acid dehydratase from Pseudomonas aeruginosa (strain LESB58).